The sequence spans 87 residues: Small ribosomal subunit protein bS18 (87 aa).

Over residues Met1–Arg19 the composition is skewed to basic residues. Positions Met1–Val25 are disordered.

This sequence belongs to the bacterial ribosomal protein bS18 family. As to quaternary structure, part of the 30S ribosomal subunit. Forms a tight heterodimer with protein bS6.

Functionally, binds as a heterodimer with protein bS6 to the central domain of the 16S rRNA, where it helps stabilize the platform of the 30S subunit. This Rhodopirellula baltica (strain DSM 10527 / NCIMB 13988 / SH1) protein is Small ribosomal subunit protein bS18.